The chain runs to 689 residues: DNA ligase (689 aa).

NAD(+) contacts are provided by residues 51–55 (DSEYD), 100–101 (SL), and glutamate 129. Catalysis depends on lysine 131, which acts as the N6-AMP-lysine intermediate. NAD(+)-binding residues include arginine 152, glutamate 189, lysine 308, and lysine 332. Cysteine 426, cysteine 429, cysteine 444, and cysteine 450 together coordinate Zn(2+). Residues 609-689 (ADEQPLKGQT…ELLALLAANR (81 aa)) form the BRCT domain.

Belongs to the NAD-dependent DNA ligase family. LigA subfamily. Mg(2+) serves as cofactor. It depends on Mn(2+) as a cofactor.

The catalysed reaction is NAD(+) + (deoxyribonucleotide)n-3'-hydroxyl + 5'-phospho-(deoxyribonucleotide)m = (deoxyribonucleotide)n+m + AMP + beta-nicotinamide D-nucleotide.. In terms of biological role, DNA ligase that catalyzes the formation of phosphodiester linkages between 5'-phosphoryl and 3'-hydroxyl groups in double-stranded DNA using NAD as a coenzyme and as the energy source for the reaction. It is essential for DNA replication and repair of damaged DNA. The chain is DNA ligase from Shewanella oneidensis (strain ATCC 700550 / JCM 31522 / CIP 106686 / LMG 19005 / NCIMB 14063 / MR-1).